The following is a 189-amino-acid chain: Homeobox protein HD-2 (189 aa).

The segment at residues 119–181 (KPRTRANFPM…NARRRILPFM (63 aa)) is a DNA-binding region (homeobox; TALE-type).

Belongs to the TALE/KNOX homeobox family.

The protein resides in the nucleus. The chain is Homeobox protein HD-2 (HD-2) from Encephalitozoon cuniculi (strain GB-M1) (Microsporidian parasite).